Here is a 181-residue protein sequence, read N- to C-terminus: Shikimate kinase 2 (181 aa).

12 to 17 is an ATP binding site; it reads GCGKTT. Residues T16 and D32 each coordinate Mg(2+). Positions 34, 58, and 79 each coordinate substrate. The tract at residues 112 to 126 is LID domain; it reads EAEPEAELRPTLTGK. Residue R120 coordinates ATP. R139 contacts substrate.

It belongs to the shikimate kinase family. AroL subfamily. Monomer. The cofactor is Mg(2+).

The protein resides in the cytoplasm. The enzyme catalyses shikimate + ATP = 3-phosphoshikimate + ADP + H(+). It functions in the pathway metabolic intermediate biosynthesis; chorismate biosynthesis; chorismate from D-erythrose 4-phosphate and phosphoenolpyruvate: step 5/7. Catalyzes the specific phosphorylation of the 3-hydroxyl group of shikimic acid using ATP as a cosubstrate. This Salmonella schwarzengrund (strain CVM19633) protein is Shikimate kinase 2.